The sequence spans 207 residues: Large ribosomal subunit protein uL4 (207 aa).

The span at 45–57 (RQGTHSVKNRSTV) shows a compositional bias: polar residues. A disordered region spans residues 45-77 (RQGTHSVKNRSTVSGGGRKPWRQKGTGNARQGS).

The protein belongs to the universal ribosomal protein uL4 family. As to quaternary structure, part of the 50S ribosomal subunit.

Its function is as follows. One of the primary rRNA binding proteins, this protein initially binds near the 5'-end of the 23S rRNA. It is important during the early stages of 50S assembly. It makes multiple contacts with different domains of the 23S rRNA in the assembled 50S subunit and ribosome. In terms of biological role, forms part of the polypeptide exit tunnel. The polypeptide is Large ribosomal subunit protein uL4 (Oenococcus oeni (strain ATCC BAA-331 / PSU-1)).